Consider the following 400-residue polypeptide: Laminin subunit B (400 aa).

Laminin EGF-like domains are found at residues 1–5 (EGCKP), 6–53 (CECD…GCKS), and 54–100 (CTCN…QCIP). 8 disulfide bridges follow: Cys6–Cys18, Cys8–Cys25, Cys27–Cys36, Cys39–Cys51, Cys54–Cys66, Cys56–Cys73, Cys75–Cys84, and Cys87–Cys98. Positions 101-400 (CGECFDNWDK…AEAKNNAHEA (300 aa)) are domain II and I. A coiled-coil region spans residues 140 to 235 (KEFEELEQVL…RENALEIQEQ (96 aa)). Residues Asn160, Asn175, Asn216, Asn266, Asn283, Asn310, and Asn356 are each glycosylated (N-linked (GlcNAc...) asparagine). The stretch at 353 to 400 (EAKNTSRKAEELIKSKYRSTSSTLSELENSNKQCKQATAEAKNNAHEA) forms a coiled coil. The tract at residues 369-400 (YRSTSSTLSELENSNKQCKQATAEAKNNAHEA) is disordered. Positions 371-383 (STSSTLSELENSN) are enriched in low complexity.

In terms of assembly, laminin is a complex glycoprotein, consisting of three different polypeptide chains (alpha, beta, gamma), which are bound to each other by disulfide bonds into a cross-shaped molecule comprising one long and three short arms with globules at each end. As to expression, individual glial and muscle cells.

The protein resides in the secreted. Its subcellular location is the extracellular space. It is found in the extracellular matrix. Binding to cells via a high affinity receptor, laminin is thought to mediate the attachment, migration and organization of cells into tissues during embryonic development by interacting with other extracellular matrix components. The protein is Laminin subunit B of Hirudo medicinalis (Medicinal leech).